A 274-amino-acid polypeptide reads, in one-letter code: Chemotaxis protein methyltransferase 1 (274 aa).

The CheR-type methyltransferase domain maps to 1–274; sequence MSAANADFEL…CSPGIIYRAK (274 aa). Residues Asn72, Thr74, Arg78, Glu115, Asp144, 200 to 201, and 217 to 218 contribute to the S-adenosyl-L-methionine site; these read NL and RN.

It catalyses the reaction L-glutamyl-[protein] + S-adenosyl-L-methionine = [protein]-L-glutamate 5-O-methyl ester + S-adenosyl-L-homocysteine. Methylation of the membrane-bound methyl-accepting chemotaxis proteins (MCP) to form gamma-glutamyl methyl ester residues in MCP. This Pseudomonas aeruginosa (strain ATCC 15692 / DSM 22644 / CIP 104116 / JCM 14847 / LMG 12228 / 1C / PRS 101 / PAO1) protein is Chemotaxis protein methyltransferase 1 (cheR1).